A 237-amino-acid polypeptide reads, in one-letter code: Sugar fermentation stimulation protein homolog (237 aa).

It belongs to the SfsA family.

The polypeptide is Sugar fermentation stimulation protein homolog (Pseudomonas syringae pv. tomato (strain ATCC BAA-871 / DC3000)).